The following is a 467-amino-acid chain: Coiled-coil domain-containing protein 174 (467 aa).

Disordered regions lie at residues 47–76 (INKKPSIWSKQNAGVTSRAEKDAEQKLEEQ) and 129–163 (GATRESQIEEERDDDDKEEFSDKDIPPPQDPSEEW). Basic and acidic residues predominate over residues 64–76 (RAEKDAEQKLEEQ). Residues 64-99 (RAEKDAEQKLEEQKTLDKAREKLEEKAKLYEKMTKG) are a coiled coil. Residues 136–147 (IEEERDDDDKEE) are compositionally biased toward acidic residues. Ser-198 carries the post-translational modification Phosphoserine. Residues 268-310 (LEMLREQTTDQRIKRENIKEKRKAMLEARLAKLRQKKMKKSKE) are a coiled coil. Disordered regions lie at residues 301 to 365 (RQKK…IREW) and 379 to 454 (KQSE…VTFQ). Basic and acidic residues-rich tracts occupy residues 349-365 (IQERRDTKPGVPHIREW) and 379-390 (KQSELRAERDPE). Residues 406–415 (PMSSQPQSRP) show a composition bias toward polar residues. Over residues 423–446 (GHSSGQSQEPSSSHTSTPASESSP) the composition is skewed to low complexity.

It localises to the nucleus. Its function is as follows. Probably involved in neuronal development. This chain is Coiled-coil domain-containing protein 174 (Ccdc174), found in Mus musculus (Mouse).